A 79-amino-acid polypeptide reads, in one-letter code: Protein S100-G (79 aa).

Serine 2 is modified (N-acetylserine). 2 consecutive EF-hand domains span residues 13-48 (IFEK…KGPN) and 45-79 (KGPN…KISQ). Glutamine 26 and glutamate 31 together coordinate Ca(2+). Phosphoserine is present on serine 42. The Ca(2+) site is built by aspartate 58, asparagine 60, aspartate 62, glutamate 64, and glutamate 69.

The protein belongs to the S-100 family.

The sequence is that of Protein S100-G (S100G) from Homo sapiens (Human).